The following is a 371-amino-acid chain: Transposase for insertion sequence element IS421 (371 aa).

It belongs to the transposase 11 family.

Its function is as follows. Involved in the transposition of the insertion sequence IS421. The protein is Transposase for insertion sequence element IS421 of Escherichia coli.